We begin with the raw amino-acid sequence, 469 residues long: Gustatory receptor for sugar taste 64f (469 aa).

At 1-117 the chain is on the cytoplasmic side; sequence MKILPKLERK…SFSWRNIRTC (117 aa). Residues 118 to 138 form a helical membrane-spanning segment; the sequence is FSLLFIASSLANFGLSLFKVL. Residues 139 to 146 lie on the Extracellular side of the membrane; that stretch reads NNPISFNS. A helical membrane pass occupies residues 147–167; that stretch reads IKPIIFRGSVLLVLIVALNLA. Over 168-199 the chain is Cytoplasmic; it reads RQWPQLMMYWHTVEKDLPQYKTQLTKWKMGHT. A helical membrane pass occupies residues 200-220; that stretch reads ISMVMLLGMMLSFAEHILSMV. Topologically, residues 221–265 are extracellular; the sequence is SAINYASFCNRTADPIQNYFLRTNDEIFFVTSYSTTLALWGKFQN. Asn230 carries an N-linked (GlcNAc...) asparagine glycan. The helical transmembrane segment at 266–286 threads the bilayer; the sequence is VFSTFIWNYMDLFVMIVSIGL. Topologically, residues 287-330 are cytoplasmic; sequence ASKFRQLNDDLRNFKGMNMAPSYWSERRIQYRNICILCDKMDDA. The helical transmembrane segment at 331–351 threads the bilayer; that stretch reads ISLITMVSFSNNLYFICVQLL. Over 352 to 353 the chain is Extracellular; the sequence is RS. A helical transmembrane segment spans residues 354–374; that stretch reads LNTMPSVAHAVYFYFSLIFLI. Residues 375–435 lie on the Cytoplasmic side of the membrane; it reads GRTLAVSLYS…GMKFFHLTRK (61 aa). The helical transmembrane segment at 436–456 threads the bilayer; sequence LVLSVAGTIVTYELVLIQFHE. The Extracellular segment spans residues 457 to 469; sequence DNDLWDCDQSYYS.

It belongs to the insect chemoreceptor superfamily. Gustatory receptor (GR) family. Gr5a subfamily. As to expression, expressed in Gr5a-expressing sugar-sensing cells.

It localises to the cell membrane. Functionally, one of the few identified sugar gustatory receptors identified so far and which promotes the starvation-induced increase of feeding motivation. Required in combination with Gr64a to detect sucrose, maltose, and glucose. This Drosophila melanogaster (Fruit fly) protein is Gustatory receptor for sugar taste 64f (Gr64f).